The primary structure comprises 112 residues: Evasin P1095 (112 aa).

Positions 1-23 (MELNAFTILQIAVFIAVGYHANT) are cleaved as a signal peptide. 3 disulfides stabilise this stretch: C48-C66, C52-C68, and C62-C79. N-linked (GlcNAc...) asparagine glycosylation is present at N51. Residues 89–112 (GDPNDDPKINEATPQTQIFEKKRK) are disordered.

The protein resides in the secreted. Functionally, salivary chemokine-binding protein which binds to host chemokine CXCL8. The polypeptide is Evasin P1095 (Ixodes ricinus (Common tick)).